The primary structure comprises 466 residues: Glutamyl-tRNA reductase (466 aa).

Residues 47 to 50 (TCNR), serine 107, 112 to 114 (EQQ), and glutamine 118 contribute to the substrate site. Residue cysteine 48 is the Nucleophile of the active site. 194–199 (GAGAMS) lines the NADP(+) pocket.

This sequence belongs to the glutamyl-tRNA reductase family. In terms of assembly, homodimer.

The enzyme catalyses (S)-4-amino-5-oxopentanoate + tRNA(Glu) + NADP(+) = L-glutamyl-tRNA(Glu) + NADPH + H(+). It functions in the pathway porphyrin-containing compound metabolism; protoporphyrin-IX biosynthesis; 5-aminolevulinate from L-glutamyl-tRNA(Glu): step 1/2. In terms of biological role, catalyzes the NADPH-dependent reduction of glutamyl-tRNA(Glu) to glutamate 1-semialdehyde (GSA). The sequence is that of Glutamyl-tRNA reductase from Corynebacterium efficiens (strain DSM 44549 / YS-314 / AJ 12310 / JCM 11189 / NBRC 100395).